Reading from the N-terminus, the 92-residue chain is Long neurotoxin 3FTx-Oxy1 (92 aa).

A signal peptide spans 1 to 21; sequence MKTLLLTLVVVTIVCLDLGYT. 5 cysteine pairs are disulfide-bonded: cysteine 24–cysteine 42, cysteine 35–cysteine 63, cysteine 48–cysteine 52, cysteine 67–cysteine 79, and cysteine 80–cysteine 85.

The protein belongs to the three-finger toxin family. Long-chain subfamily. Type II alpha-neurotoxin sub-subfamily. In terms of tissue distribution, expressed by the venom gland.

It is found in the secreted. Binds with high affinity to muscular (alpha-1/CHRNA1) and neuronal (alpha-7/CHRNA7) nicotinic acetylcholine receptor (nAChR) and inhibits acetylcholine from binding to the receptor, thereby impairing neuromuscular and neuronal transmission. This chain is Long neurotoxin 3FTx-Oxy1, found in Oxyuranus microlepidotus (Inland taipan).